The primary structure comprises 191 residues: Leucyl/phenylalanyl-tRNA--protein transferase (191 aa).

It belongs to the L/F-transferase family.

The protein resides in the cytoplasm. The catalysed reaction is N-terminal L-lysyl-[protein] + L-leucyl-tRNA(Leu) = N-terminal L-leucyl-L-lysyl-[protein] + tRNA(Leu) + H(+). The enzyme catalyses N-terminal L-arginyl-[protein] + L-leucyl-tRNA(Leu) = N-terminal L-leucyl-L-arginyl-[protein] + tRNA(Leu) + H(+). It carries out the reaction L-phenylalanyl-tRNA(Phe) + an N-terminal L-alpha-aminoacyl-[protein] = an N-terminal L-phenylalanyl-L-alpha-aminoacyl-[protein] + tRNA(Phe). Its function is as follows. Functions in the N-end rule pathway of protein degradation where it conjugates Leu, Phe and, less efficiently, Met from aminoacyl-tRNAs to the N-termini of proteins containing an N-terminal arginine or lysine. The chain is Leucyl/phenylalanyl-tRNA--protein transferase from Rubrobacter xylanophilus (strain DSM 9941 / JCM 11954 / NBRC 16129 / PRD-1).